Consider the following 386-residue polypeptide: Probable magnesium transporter NIPA5 (386 aa).

Over 1-18 (MVYSSGSWRDAYKGMSSD) the chain is Extracellular. Residues 19-39 (NVKGLVLALSSSIFIGASFIV) traverse the membrane as a helical segment. The Cytoplasmic portion of the chain corresponds to 40-61 (KKKGLKKAGASGLRAGSGGYSY). Helical transmembrane passes span 62–82 (LLEP…IANF) and 83–103 (AAYA…SIII). Topologically, residues 104 to 115 (SASLAHIILQEK) are cytoplasmic. A helical membrane pass occupies residues 116 to 136 (LHTFGILGCALCIVGSVTIVL). Over 137 to 157 (HAPQEQDIVSVLEVWNLATEP) the chain is Extracellular. The helical transmembrane segment at 158 to 178 (AFLFYAAAVVGAAIVLIVQFI) threads the bilayer. The Cytoplasmic segment spans residues 179–189 (PLYGQSHVMVY). Residues 190 to 210 (IGVCSLIGSLSVMSVKALGIA) traverse the membrane as a helical segment. Residues 211–220 (LKLTFSGTNQ) lie on the Extracellular side of the membrane. The chain crosses the membrane as a helical span at residues 221 to 241 (LGYPQTWVFTVIVLFCVITQM). At 242–255 (NYLNKALDTFNTAV) the chain is on the cytoplasmic side. A helical transmembrane segment spans residues 256–276 (VSPIYYVMFTSLTILASVIMF). The Extracellular portion of the chain corresponds to 277–283 (KDWDRQS). Residues 284 to 304 (GTQIMTELCGFVTILSGTFLL) traverse the membrane as a helical segment. Over 305–386 (HTTTDMVDGE…LRRQESSLRS (82 aa)) the chain is Cytoplasmic. The segment at 352-386 (RQESAKSPRPARQNKQLEDDLEAVPLRRQESSLRS) is disordered. A compositionally biased stretch (basic and acidic residues) spans 376 to 386 (PLRRQESSLRS).

Belongs to the NIPA (TC 2.A.7) family. Homodimer.

The protein resides in the cell membrane. Its subcellular location is the early endosome. Its function is as follows. Acts as a Mg(2+) transporter. Can also transport other divalent cations such as Fe(2+), Sr(2+), Ba(2+), Mn(2+) and Co(2+) but to a much less extent than Mg(2+). The sequence is that of Probable magnesium transporter NIPA5 from Arabidopsis thaliana (Mouse-ear cress).